A 137-amino-acid polypeptide reads, in one-letter code: Large ribosomal subunit protein uL14A (137 aa).

At S2 the chain carries N-acetylserine. 2 positions are modified to N6,N6-dimethyllysine; by RKM1: K106 and K110.

It belongs to the universal ribosomal protein uL14 family. Component of the large ribosomal subunit (LSU). Mature yeast ribosomes consist of a small (40S) and a large (60S) subunit. The 40S small subunit contains 1 molecule of ribosomal RNA (18S rRNA) and 33 different proteins (encoded by 57 genes). The large 60S subunit contains 3 rRNA molecules (25S, 5.8S and 5S rRNA) and 46 different proteins (encoded by 81 genes). Methylated by RKM1 at 2 different sites, but it is unclear which are the 2 methylated residues among Lys-40, Lys-106 and/or Lys-110.

The protein localises to the cytoplasm. Component of the ribosome, a large ribonucleoprotein complex responsible for the synthesis of proteins in the cell. The small ribosomal subunit (SSU) binds messenger RNAs (mRNAs) and translates the encoded message by selecting cognate aminoacyl-transfer RNA (tRNA) molecules. The large subunit (LSU) contains the ribosomal catalytic site termed the peptidyl transferase center (PTC), which catalyzes the formation of peptide bonds, thereby polymerizing the amino acids delivered by tRNAs into a polypeptide chain. The nascent polypeptides leave the ribosome through a tunnel in the LSU and interact with protein factors that function in enzymatic processing, targeting, and the membrane insertion of nascent chains at the exit of the ribosomal tunnel. This is Large ribosomal subunit protein uL14A from Saccharomyces cerevisiae (strain ATCC 204508 / S288c) (Baker's yeast).